The following is a 365-amino-acid chain: Chorismate synthase (365 aa).

Arg-48 is a binding site for NADP(+). FMN-binding positions include 125–127, 238–239, Gly-278, 293–297, and Arg-319; these read RSS, NA, and KPTSS.

The protein belongs to the chorismate synthase family. Homotetramer. It depends on FMNH2 as a cofactor.

It carries out the reaction 5-O-(1-carboxyvinyl)-3-phosphoshikimate = chorismate + phosphate. It participates in metabolic intermediate biosynthesis; chorismate biosynthesis; chorismate from D-erythrose 4-phosphate and phosphoenolpyruvate: step 7/7. Catalyzes the anti-1,4-elimination of the C-3 phosphate and the C-6 proR hydrogen from 5-enolpyruvylshikimate-3-phosphate (EPSP) to yield chorismate, which is the branch point compound that serves as the starting substrate for the three terminal pathways of aromatic amino acid biosynthesis. This reaction introduces a second double bond into the aromatic ring system. The polypeptide is Chorismate synthase (Ruthia magnifica subsp. Calyptogena magnifica).